The chain runs to 65 residues: Hirudin-3B' (65 aa).

An interaction with thrombin active site region spans residues 1 to 3 (VVY). 3 cysteine pairs are disulfide-bonded: C6/C14, C16/C28, and C22/C39. Positions 40 to 65 (VTGEGTPKPQSHNDGDFEEIPEEYLQ) are disordered. O-linked (GalNAc...) threonine glycosylation occurs at T45. Positions 55-65 (DFEEIPEEYLQ) are interaction with fibrinogen-binding exosite of thrombin. Residues 55–65 (DFEEIPEEYLQ) show a composition bias toward acidic residues. The residue at position 63 (Y63) is a Sulfotyrosine.

This sequence belongs to the protease inhibitor I14 (hirudin) family.

Its subcellular location is the secreted. In terms of biological role, hirudin is a potent thrombin-specific protease inhibitor. It forms a stable non-covalent complex with alpha-thrombin, thereby abolishing its ability to cleave fibrinogen. The chain is Hirudin-3B' from Hirudo medicinalis (Medicinal leech).